A 344-amino-acid chain; its full sequence is Phosphoribosylformylglycinamidine cyclo-ligase (344 aa).

The protein belongs to the AIR synthase family.

It is found in the cytoplasm. The enzyme catalyses 2-formamido-N(1)-(5-O-phospho-beta-D-ribosyl)acetamidine + ATP = 5-amino-1-(5-phospho-beta-D-ribosyl)imidazole + ADP + phosphate + H(+). It functions in the pathway purine metabolism; IMP biosynthesis via de novo pathway; 5-amino-1-(5-phospho-D-ribosyl)imidazole from N(2)-formyl-N(1)-(5-phospho-D-ribosyl)glycinamide: step 2/2. In Neisseria meningitidis serogroup C / serotype 2a (strain ATCC 700532 / DSM 15464 / FAM18), this protein is Phosphoribosylformylglycinamidine cyclo-ligase.